Reading from the N-terminus, the 75-residue chain is UPF0291 protein LMOf2365_1322 (75 aa).

Residues 56 to 75 (DPNGTDVTPHKVKQLRKNKH) are disordered. Residues 65–75 (HKVKQLRKNKH) are compositionally biased toward basic residues.

Belongs to the UPF0291 family.

The protein resides in the cytoplasm. This chain is UPF0291 protein LMOf2365_1322, found in Listeria monocytogenes serotype 4b (strain F2365).